A 511-amino-acid chain; its full sequence is Maturase K (511 aa).

Belongs to the intron maturase 2 family. MatK subfamily.

The protein localises to the plastid. It localises to the chloroplast. Functionally, usually encoded in the trnK tRNA gene intron. Probably assists in splicing its own and other chloroplast group II introns. This chain is Maturase K, found in Primula veris (Cowslip).